We begin with the raw amino-acid sequence, 711 residues long: DNA topoisomerase 1 (711 aa).

A Toprim domain is found at 3–134; that stretch reads KNLVVIESPN…KCQRITFNEI (132 aa). The Mg(2+) site is built by E9 and D102. In terms of domain architecture, Topo IA-type catalytic spans 150–604; it reads DQSWVQSQFA…FWSNFKEEVK (455 aa). Residues 183-188 form an interaction with DNA region; that stretch reads SAGRVQ. Y340 (O-(5'-phospho-DNA)-tyrosine intermediate) is an active-site residue. 2 consecutive C4-type zinc fingers follow at residues 624–652 and 673–702; these read CPSCASPLLYRYTKRGNEKFVGCSNFPNC and CPECNSQLVKRRTKFNPNKTFVGCSNFPRC.

It belongs to the type IA topoisomerase family. In terms of assembly, monomer. It depends on Mg(2+) as a cofactor.

It catalyses the reaction ATP-independent breakage of single-stranded DNA, followed by passage and rejoining.. In terms of biological role, releases the supercoiling and torsional tension of DNA, which is introduced during the DNA replication and transcription, by transiently cleaving and rejoining one strand of the DNA duplex. Introduces a single-strand break via transesterification at a target site in duplex DNA. The scissile phosphodiester is attacked by the catalytic tyrosine of the enzyme, resulting in the formation of a DNA-(5'-phosphotyrosyl)-enzyme intermediate and the expulsion of a 3'-OH DNA strand. The free DNA strand then undergoes passage around the unbroken strand, thus removing DNA supercoils. Finally, in the religation step, the DNA 3'-OH attacks the covalent intermediate to expel the active-site tyrosine and restore the DNA phosphodiester backbone. This is DNA topoisomerase 1 from Mycoplasma pneumoniae (strain ATCC 29342 / M129 / Subtype 1) (Mycoplasmoides pneumoniae).